The sequence spans 350 residues: Ribonuclease H2 subunit B (350 aa).

Residues 134–151 show a composition bias toward polar residues; sequence QDYSNSSDTGENQKSNSK. Positions 134 to 153 are disordered; the sequence is QDYSNSSDTGENQKSNSKTN.

This sequence belongs to the RNase H2 subunit B family. Highly divergent. In terms of assembly, the RNase 2 complex is a heterotrimer composed of the catalytic subunit RNH201 and of the non-catalytic subunits RNH202 and RNH203.

It is found in the nucleus. In terms of biological role, non catalytic subunit of RNase H2, an endonuclease that specifically degrades the RNA of RNA:DNA hybrids. Participates in DNA replication, possibly by mediating the removal of lagging-strand Okazaki fragment RNA primers during DNA replication. Mediates the excision of single ribonucleotides from DNA:RNA duplexes. This chain is Ribonuclease H2 subunit B (RNH202), found in Saccharomyces cerevisiae (strain ATCC 204508 / S288c) (Baker's yeast).